The sequence spans 193 residues: Ion-translocating oxidoreductase complex subunit A (193 aa).

The next 6 helical transmembrane spans lie at 4–24 (LALI…KFLG), 38–58 (AMGM…CSYL), 65–85 (APLG…AVVV), 102–122 (VLGI…VALL), 134–154 (AVYG…FAAL), and 171–191 (SVAL…AGLV).

This sequence belongs to the NqrDE/RnfAE family. The complex is composed of six subunits: RnfA, RnfB, RnfC, RnfD, RnfE and RnfG.

The protein resides in the cell inner membrane. In terms of biological role, part of a membrane-bound complex that couples electron transfer with translocation of ions across the membrane. This chain is Ion-translocating oxidoreductase complex subunit A, found in Alkalilimnicola ehrlichii (strain ATCC BAA-1101 / DSM 17681 / MLHE-1).